A 142-amino-acid chain; its full sequence is Ribosomal RNA large subunit methyltransferase H (142 aa).

Residues L55 and G87 each coordinate S-adenosyl-L-methionine.

Belongs to the RNA methyltransferase RlmH family. Homodimer.

Its subcellular location is the cytoplasm. It carries out the reaction pseudouridine(1915) in 23S rRNA + S-adenosyl-L-methionine = N(3)-methylpseudouridine(1915) in 23S rRNA + S-adenosyl-L-homocysteine + H(+). Functionally, specifically methylates the pseudouridine at position 1915 (m3Psi1915) in 23S rRNA. The chain is Ribosomal RNA large subunit methyltransferase H from Sphingopyxis alaskensis (strain DSM 13593 / LMG 18877 / RB2256) (Sphingomonas alaskensis).